The chain runs to 212 residues: Uridine kinase (212 aa).

ATP is bound at residue 13–20 (GGSGSGKT).

The protein belongs to the uridine kinase family.

Its subcellular location is the cytoplasm. The enzyme catalyses uridine + ATP = UMP + ADP + H(+). The catalysed reaction is cytidine + ATP = CMP + ADP + H(+). Its pathway is pyrimidine metabolism; CTP biosynthesis via salvage pathway; CTP from cytidine: step 1/3. It participates in pyrimidine metabolism; UMP biosynthesis via salvage pathway; UMP from uridine: step 1/1. This is Uridine kinase from Bacillus cytotoxicus (strain DSM 22905 / CIP 110041 / 391-98 / NVH 391-98).